Reading from the N-terminus, the 364-residue chain is Abhydrolase domain-containing protein C57A10.08c (364 aa).

Residues 1–8 (MYFFTISR) lie on the Cytoplasmic side of the membrane. The helical; Signal-anchor for type II membrane protein transmembrane segment at 9-29 (LTSFISYGILGALGILTFLYL) threads the bilayer. The Lumenal segment spans residues 30–364 (YDAYLAKSFQ…DKFSTTDHNI (335 aa)). Ser183 (charge relay system) is an active-site residue. The N-linked (GlcNAc...) asparagine glycan is linked to Asn326. Catalysis depends on His336, which acts as the Charge relay system.

This sequence belongs to the AB hydrolase superfamily.

The protein resides in the endoplasmic reticulum membrane. The sequence is that of Abhydrolase domain-containing protein C57A10.08c from Schizosaccharomyces pombe (strain 972 / ATCC 24843) (Fission yeast).